The following is a 236-amino-acid chain: Potassium/proton antiporter CemA (236 aa).

4 helical membrane-spanning segments follow: residues 18–38 (YIIS…FLVL), 114–134 (IAHV…LINA), 161–181 (LILF…KILI), and 196–216 (FIFL…KYWI).

It belongs to the CemA family.

It is found in the plastid. The protein resides in the chloroplast inner membrane. The catalysed reaction is K(+)(in) + H(+)(out) = K(+)(out) + H(+)(in). Contributes to K(+)/H(+) antiport activity by supporting proton efflux to control proton extrusion and homeostasis in chloroplasts in a light-dependent manner to modulate photosynthesis. Prevents excessive induction of non-photochemical quenching (NPQ) under continuous-light conditions. Indirectly promotes efficient inorganic carbon uptake into chloroplasts. In Mesostigma viride (Green alga), this protein is Potassium/proton antiporter CemA.